The primary structure comprises 316 residues: Glutathione synthetase (316 aa).

One can recognise an ATP-grasp domain in the interval Asn-124–Glu-311. Residue Phe-151–Gly-208 participates in ATP binding. Positions 282 and 284 each coordinate Mg(2+).

It belongs to the prokaryotic GSH synthase family. Mg(2+) is required as a cofactor. Mn(2+) serves as cofactor.

The catalysed reaction is gamma-L-glutamyl-L-cysteine + glycine + ATP = glutathione + ADP + phosphate + H(+). Its pathway is sulfur metabolism; glutathione biosynthesis; glutathione from L-cysteine and L-glutamate: step 2/2. This chain is Glutathione synthetase, found in Xanthomonas axonopodis pv. citri (strain 306).